The primary structure comprises 376 residues: Alanine racemase (376 aa).

Residue lysine 44 is the Proton acceptor; specific for D-alanine of the active site. N6-(pyridoxal phosphate)lysine is present on lysine 44. Arginine 139 is a substrate binding site. Tyrosine 271 (proton acceptor; specific for L-alanine) is an active-site residue. Methionine 319 is a binding site for substrate.

Belongs to the alanine racemase family. Pyridoxal 5'-phosphate is required as a cofactor.

It catalyses the reaction L-alanine = D-alanine. It participates in amino-acid biosynthesis; D-alanine biosynthesis; D-alanine from L-alanine: step 1/1. Catalyzes the interconversion of L-alanine and D-alanine. May also act on other amino acids. In Bordetella petrii (strain ATCC BAA-461 / DSM 12804 / CCUG 43448), this protein is Alanine racemase (alr).